Here is a 380-residue protein sequence, read N- to C-terminus: Fibromodulin (380 aa).

Residues 1-18 (MRWANILLVAGLCRASLG) form the signal peptide. An LRRNT domain is found at 71–109 (EAQQASSWQCPQECDCPPNFSSAMYCDTRNLRYLPFVPT). A glycan (N-linked (GlcNAc...) asparagine) is linked at Asn-89. 8 LRR repeats span residues 110–131 (RMKYVYFQNNQITAIQEGAFDN), 134–147 (ELEWLALHNNQISS), 160–180 (NLERLYMNNNNLTKMPSPLPR), 181–202 (SLRELHLSYNQISKVPSNALEG), 205–227 (NLTALYLSHNYIFEMGASLKGLK), 228–248 (SLILADLSYNHLRKVPDGLPM), 249–270 (ALEQLYLEYNYINAIPDDYFKV), and 273–293 (KLLYVRMSHNSLTNQGLSTNT). A glycan (N-linked (GlcNAc...) (keratan sulfate) asparagine) is linked at Asn-131. A glycan (N-linked (GlcNAc...) (keratan sulfate) asparagine) is linked at Asn-170. Asn-205 carries an N-linked (GlcNAc...) (keratan sulfate) asparagine glycan. Asn-295 carries N-linked (GlcNAc...) (keratan sulfate) asparagine glycosylation. LRR repeat units lie at residues 298 to 317 (SILELDLSYNRLQKIPRVST) and 318 to 339 (NLENLYLQGNQINEFSISSFCT). Cys-338 and Cys-371 are oxidised to a cystine. The N-linked (GlcNAc...) asparagine glycan is linked to Asn-345. An LRR 11 repeat occupies 348-371 (RLQVLRLDGNEIKRNAMPPDAPLC).

Belongs to the small leucine-rich proteoglycan (SLRP) family. SLRP class II subfamily. As to quaternary structure, binds to type I and type II collagen. In terms of processing, binds keratan sulfate chains.

The protein localises to the secreted. Its subcellular location is the extracellular space. It is found in the extracellular matrix. Its function is as follows. Affects the rate of fibrils formation. May have a primary role in collagen fibrillogenesis. The chain is Fibromodulin (FMOD) from Gallus gallus (Chicken).